The sequence spans 522 residues: 2-isopropylmalate synthase (522 aa).

In terms of domain architecture, Pyruvate carboxyltransferase spans 5–267 (VIIFDTTLRD…ETGINAKEIH (263 aa)). Mn(2+)-binding residues include D14, H202, H204, and N238. Residues 392-522 (QLQQLVVQSD…MHKNRELGGV (131 aa)) are regulatory domain.

The protein belongs to the alpha-IPM synthase/homocitrate synthase family. LeuA type 1 subfamily. As to quaternary structure, homodimer. It depends on Mn(2+) as a cofactor.

It is found in the cytoplasm. The enzyme catalyses 3-methyl-2-oxobutanoate + acetyl-CoA + H2O = (2S)-2-isopropylmalate + CoA + H(+). Its pathway is amino-acid biosynthesis; L-leucine biosynthesis; L-leucine from 3-methyl-2-oxobutanoate: step 1/4. Its function is as follows. Catalyzes the condensation of the acetyl group of acetyl-CoA with 3-methyl-2-oxobutanoate (2-ketoisovalerate) to form 3-carboxy-3-hydroxy-4-methylpentanoate (2-isopropylmalate). This chain is 2-isopropylmalate synthase, found in Shewanella sp. (strain MR-7).